Consider the following 380-residue polypeptide: Flap endonuclease 1 (380 aa).

The N-domain stretch occupies residues 1–104 (MGIQGLAKLI…GELAKRSERR (104 aa)). R19 carries the symmetric dimethylarginine; by PRMT5 modification. D34 contacts Mg(2+). DNA is bound by residues R47 and R70. Position 80 is an N6-acetyllysine (K80). A Mg(2+)-binding site is contributed by D86. Symmetric dimethylarginine; by PRMT5 occurs at positions 100 and 104. Residues 122–253 (EVEKFTKRLV…KRAVDLIQKH (132 aa)) are I-domain. Mg(2+) is bound by residues E158, E160, D179, and D181. Residue E158 participates in DNA binding. Position 187 is a phosphoserine; by CDK2 (S187). A Symmetric dimethylarginine; by PRMT5 modification is found at R192. Residue S197 is modified to Phosphoserine. 2 residues coordinate DNA: G231 and D233. D233 is a binding site for Mg(2+). 3 positions are modified to phosphoserine: S255, S293, and S335. The interval 327 to 380 (RLSKSRQGSTQGRLDDFFKVTGSLSSAKRKEPEPKGSTKKKAKTGAAGKFKRGK) is disordered. T336 carries the phosphothreonine modification. The tract at residues 336–344 (TQGRLDDFF) is interaction with PCNA. K354 is subject to N6-acetyllysine. Over residues 363-380 (STKKKAKTGAAGKFKRGK) the composition is skewed to basic residues. T364 is subject to Phosphothreonine. N6-acetyllysine is present on residues K375, K377, and K380.

It belongs to the XPG/RAD2 endonuclease family. FEN1 subfamily. In terms of assembly, interacts with PCNA. Three molecules of FEN1 bind to one PCNA trimer with each molecule binding to one PCNA monomer. PCNA stimulates the nuclease activity without altering cleavage specificity. The C-terminal domain binds EP300; can bind simultaneously to both PCNA and EP300. Interacts with DDX11; this interaction is direct and increases flap endonuclease activity of FEN1. Interacts with WDR4; regulating its endonuclease activity. Interacts with POLB. Mg(2+) is required as a cofactor. Post-translationally, acetylated by EP300. Acetylation inhibits both endonuclease and exonuclease activity. Acetylation also reduces DNA-binding activity but does not affect interaction with PCNA or EP300. Phosphorylation upon DNA damage induces relocalization to the nuclear plasma. Phosphorylation at Ser-187 by CDK2 occurs during late S-phase and results in dissociation from PCNA. In terms of processing, methylation at Arg-192 by PRMT5 impedes Ser-187 phosphorylation and increases interaction with PCNA.

The protein localises to the nucleus. The protein resides in the nucleolus. It is found in the nucleoplasm. It localises to the mitochondrion. Structure-specific nuclease with 5'-flap endonuclease and 5'-3' exonuclease activities involved in DNA replication and repair. During DNA replication, cleaves the 5'-overhanging flap structure that is generated by displacement synthesis when DNA polymerase encounters the 5'-end of a downstream Okazaki fragment. It enters the flap from the 5'-end and then tracks to cleave the flap base, leaving a nick for ligation. Also involved in the long patch base excision repair (LP-BER) pathway, by cleaving within the apurinic/apyrimidinic (AP) site-terminated flap. Acts as a genome stabilization factor that prevents flaps from equilibrating into structures that lead to duplications and deletions. Also possesses 5'-3' exonuclease activity on nicked or gapped double-stranded DNA, and exhibits RNase H activity. Also involved in replication and repair of rDNA and in repairing mitochondrial DNA. In Macaca fascicularis (Crab-eating macaque), this protein is Flap endonuclease 1.